The following is a 482-amino-acid chain: Glutamyl-tRNA(Gln) amidotransferase subunit A (482 aa).

Residues lysine 75 and serine 150 each act as charge relay system in the active site. Serine 174 (acyl-ester intermediate) is an active-site residue.

The protein belongs to the amidase family. GatA subfamily. Heterotrimer of A, B and C subunits.

It catalyses the reaction L-glutamyl-tRNA(Gln) + L-glutamine + ATP + H2O = L-glutaminyl-tRNA(Gln) + L-glutamate + ADP + phosphate + H(+). Allows the formation of correctly charged Gln-tRNA(Gln) through the transamidation of misacylated Glu-tRNA(Gln) in organisms which lack glutaminyl-tRNA synthetase. The reaction takes place in the presence of glutamine and ATP through an activated gamma-phospho-Glu-tRNA(Gln). In Cyanothece sp. (strain PCC 7425 / ATCC 29141), this protein is Glutamyl-tRNA(Gln) amidotransferase subunit A.